The chain runs to 587 residues: Arginine--tRNA ligase (587 aa).

Positions proline 127–histidine 137 match the 'HIGH' region motif.

Belongs to the class-I aminoacyl-tRNA synthetase family. As to quaternary structure, monomer.

It localises to the cytoplasm. It catalyses the reaction tRNA(Arg) + L-arginine + ATP = L-arginyl-tRNA(Arg) + AMP + diphosphate. The sequence is that of Arginine--tRNA ligase from Pseudomonas aeruginosa (strain ATCC 15692 / DSM 22644 / CIP 104116 / JCM 14847 / LMG 12228 / 1C / PRS 101 / PAO1).